A 342-amino-acid chain; its full sequence is Methyltransferase ungE' (342 aa).

This sequence belongs to the methyltransferase superfamily.

The protein operates within secondary metabolite biosynthesis. Functionally, methyltransferase; part of the gene cluster that mediates the biosynthesis of the unguisins, gamma-aminobutyric acid (GABA)-containing fungal cyclic heptapeptides with the amino acid sequence cyclo-(D-Ala1-D-Val2-L-Leu3-beta-MePhe4-D-Ala5-D-Trp6-GABA7) for unguisin H and cyclo-(D-Ala1-D-Ala2-L-Leu3-beta-MePhe4-D-Ala5-D-Trp6-GABA7) for unguisin I. Within the pathway, the methyltransferase ungE' is probably involved in the synthesis of the (2R,3R)-beta-methylphenylalanine residue incorporated by the module 4 of the nonribosomal peptide synthetase (NRPS) ungA'. The alanine racemase ungC' catalyzes the interconversion of L-alanine and D-alanine, providing the D-alanine which is accepted by the first adenylation domain of ungA'. UngA' is the main enzyme within the cluster which condenses the 7 residues using its respective 7 modules. The terminal condensation domain (Ct) is involved in cyclization with D-alanine and thereby releasing of unguisins H and I. Finally, the hydrolase ungD' catalyzes the hydrolysis between the D-tryptophan and GABA residues of unguisins H and I to produce the corresponding linear peptides. The polypeptide is Methyltransferase ungE' (Aspergillus campestris (strain IBT 28561)).